The following is a 1082-amino-acid chain: SURP and G-patch domain-containing protein 2 (1082 aa).

Thr-7 is subject to Phosphothreonine. Residues 65–97 (LSGSVAHSRDAGREGLRSDVFPGPSFRSSNPSI) form a disordered region. Positions 71 to 81 (HSRDAGREGLR) are enriched in basic and acidic residues. 2 positions are modified to phosphoserine: Ser-96 and Ser-224. Lys-228 participates in a covalent cross-link: Glycyl lysine isopeptide (Lys-Gly) (interchain with G-Cter in SUMO2). The residue at position 275 (Thr-275) is a Phosphothreonine. At Ser-277 the chain carries Phosphoserine. Residue Lys-305 forms a Glycyl lysine isopeptide (Lys-Gly) (interchain with G-Cter in SUMO2) linkage. A phosphoserine mark is found at Ser-315, Ser-573, and Ser-603. The stretch at 590–633 (IDQLVKRVIEGSLSPKERTLLKEDPAYWFLSDENSLEYKYYKLK) is one SURP motif 1 repeat. Residue Lys-650 forms a Glycyl lysine isopeptide (Lys-Gly) (interchain with G-Cter in SUMO2) linkage. Residues 694–779 (RRATTGTQTL…QTSSPCPSAD (86 aa)) form a disordered region. Residues 697 to 708 (TTGTQTLLSSGT) show a composition bias toward low complexity. The span at 727-738 (LPDRNDAAKDCP) shows a compositional bias: basic and acidic residues. Residues Ser-754 and Ser-757 each carry the phosphoserine modification. Residues 787–830 (TAEKLARFVAQVGPEIEQFSIENSTDNPDLWFLHDQNSSAFKFY) form an SURP motif 2 repeat. Disordered stretches follow at residues 849–930 (NLHT…EAAE), 982–1002 (RIAY…PKDL), and 1030–1061 (LGSL…EHKE). Ser-863 carries the phosphoserine modification. 2 stretches are compositionally biased toward acidic residues: residues 868–877 (MEGEAEFEDE) and 885–904 (LESP…DGGE). Basic residues predominate over residues 990 to 999 (GRPMSKKKKP). Positions 995–1000 (KKKKPK) match the Nuclear localization signal motif. The G-patch domain occupies 1011–1057 (DKNLGFQMLQKMGWKEGHGLGSLGKGIREPVSVGTPSEGEGLGADGQ).

As to expression, detected in adult testis, and in fetal brain and kidney.

It localises to the nucleus. Its function is as follows. May play a role in mRNA splicing. The sequence is that of SURP and G-patch domain-containing protein 2 (SUGP2) from Homo sapiens (Human).